We begin with the raw amino-acid sequence, 215 residues long: Ribonuclease T (215 aa).

The 175-residue stretch at 20-194 (VVIDVETAGF…YDTERTAVLF (175 aa)) folds into the Exonuclease domain. Mg(2+) contacts are provided by Asp-23, Glu-25, His-181, and Asp-186. Residue His-181 is the Proton donor/acceptor of the active site.

The protein belongs to the RNase T family. As to quaternary structure, homodimer. Mg(2+) is required as a cofactor.

In terms of biological role, trims short 3' overhangs of a variety of RNA species, leaving a one or two nucleotide 3' overhang. Responsible for the end-turnover of tRNA: specifically removes the terminal AMP residue from uncharged tRNA (tRNA-C-C-A). Also appears to be involved in tRNA biosynthesis. This chain is Ribonuclease T, found in Salmonella choleraesuis (strain SC-B67).